Consider the following 93-residue polypeptide: Class II hydrophobin 1 (93 aa).

The first 16 residues, 1-16 (MKFFAVAALFVASAMA), serve as a signal peptide directing secretion. Disulfide bonds link Cys-24/Cys-74, Cys-35/Cys-65, Cys-36/Cys-48, and Cys-75/Cys-86.

It belongs to the cerato-ulmin hydrophobin family. As to quaternary structure, interacts with maize ubiquilin 1-like (UBL) protein. Homotetramer. Further self-assembles to form highly ordered films at water-air interfaces through intermolecular interactions.

The protein resides in the cell membrane. Its function is as follows. Aerial growth, conidiation, and dispersal of filamentous fungi in the environment rely upon a capability of their secreting small amphipathic proteins called hydrophobins (HPBs) with low sequence identity. Class I can self-assemble into an outermost layer of rodlet bundles on aerial cell surfaces, conferring cellular hydrophobicity that supports fungal growth, development and dispersal; whereas Class II form highly ordered films at water-air interfaces through intermolecular interactions but contribute nothing to the rodlet structure. Hyd1 is a class II hydrophobin that acts as an elicitor of induced systemic resistance (ISR) in plants. During interaction with the plant, binds with the maize target protein UBL in order to recruit more UBL proteins in maize roots to elicit plant defense responses, including cell death as well as brassinosteroid, jasmonate (JA) and ethylene (ET) signaling. In Trichoderma harzianum (Hypocrea lixii), this protein is Class II hydrophobin 1.